Here is a 371-residue protein sequence, read N- to C-terminus: Fructose-1,6-bisphosphatase class 1 1 (371 aa).

Residues Glu115, Asp134, Leu136, and Asp137 each coordinate Mg(2+). Residues 137 to 140, Asn228, and 280 to 282 contribute to the substrate site; these read DGSS and YLY. Glu300 is a binding site for Mg(2+).

This sequence belongs to the FBPase class 1 family. In terms of assembly, homotetramer. It depends on Mg(2+) as a cofactor.

It localises to the cytoplasm. It carries out the reaction beta-D-fructose 1,6-bisphosphate + H2O = beta-D-fructose 6-phosphate + phosphate. Its pathway is carbohydrate biosynthesis; gluconeogenesis. This Xanthobacter autotrophicus (strain ATCC BAA-1158 / Py2) protein is Fructose-1,6-bisphosphatase class 1 1.